A 126-amino-acid polypeptide reads, in one-letter code: Large ribosomal subunit protein bL12 (126 aa).

The segment at 97-126 is disordered; sequence PQPVKSGVSKEEAEEAKKQLAESGAEVEVK. The segment covering 104–116 has biased composition (basic and acidic residues); it reads VSKEEAEEAKKQL.

This sequence belongs to the bacterial ribosomal protein bL12 family. Homodimer. Part of the ribosomal stalk of the 50S ribosomal subunit. Forms a multimeric L10(L12)X complex, where L10 forms an elongated spine to which 2 to 4 L12 dimers bind in a sequential fashion. Binds GTP-bound translation factors.

Functionally, forms part of the ribosomal stalk which helps the ribosome interact with GTP-bound translation factors. Is thus essential for accurate translation. The sequence is that of Large ribosomal subunit protein bL12 from Geotalea uraniireducens (strain Rf4) (Geobacter uraniireducens).